We begin with the raw amino-acid sequence, 66 residues long: Neurotoxin Cex11 (66 aa).

An LCN-type CS-alpha/beta domain is found at 1–64; sequence KEGYPVNIYT…SYPYPEKSCG (64 aa). 4 cysteine pairs are disulfide-bonded: Cys-12–Cys-63, Cys-16–Cys-39, Cys-25–Cys-44, and Cys-29–Cys-46. The residue at position 63 (Cys-63) is a Cysteine amide. Positions 64–66 are excised as a propeptide; it reads GRK.

Belongs to the long (4 C-C) scorpion toxin superfamily. Sodium channel inhibitor family. Beta subfamily. In terms of tissue distribution, expressed by the venom gland.

The protein localises to the secreted. Functionally, beta toxins bind voltage-independently at site-4 of sodium channels (Nav) and shift the voltage of activation toward more negative potentials thereby affecting sodium channel activation and promoting spontaneous and repetitive firing. In Centruroides exilicauda (Bark scorpion), this protein is Neurotoxin Cex11.